Reading from the N-terminus, the 118-residue chain is MILSMLKAKLHGATVTQCDLHYEGSVSIDQDLLDASGILPHEKVDIWNVTNGARIQTYALEAPRGSRTIGVNGAAARHFAVGDTVIIAAFCGVEAEKARQHAPTVVLLGEGNEIKRAS.

The Schiff-base intermediate with substrate; via pyruvic acid role is filled by Ser25. The residue at position 25 (Ser25) is a Pyruvic acid (Ser). Thr57 is a binding site for substrate. The active-site Proton donor is the Tyr58. Position 73-75 (73-75) interacts with substrate; the sequence is GAA.

This sequence belongs to the PanD family. In terms of assembly, heterooctamer of four alpha and four beta subunits. Pyruvate serves as cofactor. In terms of processing, is synthesized initially as an inactive proenzyme, which is activated by self-cleavage at a specific serine bond to produce a beta-subunit with a hydroxyl group at its C-terminus and an alpha-subunit with a pyruvoyl group at its N-terminus.

It is found in the cytoplasm. It carries out the reaction L-aspartate + H(+) = beta-alanine + CO2. It participates in cofactor biosynthesis; (R)-pantothenate biosynthesis; beta-alanine from L-aspartate: step 1/1. Functionally, catalyzes the pyruvoyl-dependent decarboxylation of aspartate to produce beta-alanine. This chain is Aspartate 1-decarboxylase, found in Hyphomonas neptunium (strain ATCC 15444).